Consider the following 1383-residue polypeptide: WD repeat-containing protein dyf-2 (1383 aa).

WD repeat units lie at residues 32–71 (EHGS…IDAL), 72–112 (NPTG…TDTV), 118–157 (SSKE…RIAV), 160–198 (KHQR…VSTT), and 337–376 (ETEK…LAAS). 7 TPR repeats span residues 756–789 (EEKN…MEAL), 810–847 (PKEI…NPQN), 885–918 (RVVK…DRAA), 940–973 (PKIH…DNQV), 996–1029 (IEGA…QEAF), 1031–1053 (LAEK…NISQ), and 1064–1097 (VNDM…ENCV).

Component of the IFT complex A (IFT-A) composed of at least che-11, daf-10, dyf-2, ift-139, ift-43 and ifta-1. Expressed in ciliated sensory neurons.

It localises to the cell projection. It is found in the cilium. Component of the IFT complex A (IFT-A), a complex required for retrograde ciliary transport. Moves along the ciliary axoneme and is involved in the assembly, localization and the movement of other intraflagellar transport (IFT) proteins along the cilia axoneme. May also associate with the BBSome complex in order to mediate ciliary transport. Regulates cilia biogenesis, morphology and sensitivity to environmental cues. The polypeptide is WD repeat-containing protein dyf-2 (Caenorhabditis elegans).